We begin with the raw amino-acid sequence, 133 residues long: Interleukin-4 (133 aa).

An N-terminal signal peptide occupies residues 1–24 (MGLTSQLIPTLVCLLACTSNFVHG). 3 disulfide bridges follow: Cys27/Cys133, Cys48/Cys85, and Cys70/Cys105. Asn62 carries an N-linked (GlcNAc...) asparagine glycan.

The protein belongs to the IL-4/IL-13 family.

It is found in the secreted. Participates in at least several B-cell activation processes as well as of other cell types. It is a costimulator of DNA-synthesis. It induces the expression of class II MHC molecules on resting B-cells. It enhances both secretion and cell surface expression of IgE and IgG1. It also regulates the expression of the low affinity Fc receptor for IgE (CD23) on both lymphocytes and monocytes. Positively regulates IL31RA expression in macrophages. Stimulates autophagy in dendritic cells by interfering with mTORC1 signaling and through the induction of RUFY4. This is Interleukin-4 (IL4) from Sus scrofa (Pig).